Here is a 365-residue protein sequence, read N- to C-terminus: Transcription factor KUA1 (365 aa).

The interval 1-21 is disordered; it reads MTRRCSHCNHNGHNSRTCPNR. The segment at 3–20 adopts a CCHC-type zinc-finger fold; it reads RRCSHCNHNGHNSRTCPN. Residues 8 to 18 are compositionally biased toward polar residues; that stretch reads CNHNGHNSRTC. Positions 24–28 match the R/KLFGV (transcriptional repression) motif; that stretch reads KLFGV. The tract at residues 41 to 99 is disordered; that stretch reads MGNLSHYTGSGSGGHGTGSNTPGSPGDVPDHVAGDGYASEDFVAGSSSSRERKKGTPWT. Residues 90–146 form the HTH myb-type domain; the sequence is RERKKGTPWTEEEHRMFLLGLQKLGKGDWRGISRNYVTTRTPTQVASHAQKYFIRQS. Residues 118–142 constitute a DNA-binding region (H-T-H motif); it reads WRGISRNYVTTRTPTQVASHAQKYF. 2 disordered regions span residues 214–254 and 321–365; these read SMDS…QPQL and ESNK…IHAL. A compositionally biased stretch (low complexity) spans 220–254; it reads STTGEPTATAAAASSSSRLEETTQLQSQLQPQPQL. The segment covering 343–355 has biased composition (polar residues); that stretch reads RQSAFHPNPSSDS.

Expressed ubiquitously, except in hypocotyls, root tips and lateral root primordia.

Its subcellular location is the nucleus. Transcriptional repressor. Direct regulator of the transcription of peroxidase (Prxs) and reactive oxygen species (ROS)-related genes via the recognition of 5'-ATCACA-3' motif. Binds to 5'-TATCCA-3' motif (TA box) and represses the activity of corresponding promoters (e.g. sugar response genes). Regulates hypocotyl elongation in response to darkness by enhancing auxin accumulation in a phytochrome-interacting factor (PIF) proteins-dependent manner. Promotes lateral roots formation. Promotes cell expansion during leaves development via the modulation of cell wall-located Prxs. Plays a critical role in developmentally regulated and dark-induced onset of leaf senescence by repressing the transcription of several genes involved in chloroplast function and responses to light and auxin. Promotes responses to auxin, abscisic acid (ABA), and ethylene. This Arabidopsis thaliana (Mouse-ear cress) protein is Transcription factor KUA1.